We begin with the raw amino-acid sequence, 435 residues long: CUB and peptidase domain-containing protein 1 (435 aa).

Residues Ser1–Gly16 form the signal peptide. Positions Ile25 to Ser261 constitute a Peptidase S1 domain. An intrachain disulfide couples Cys50 to Cys66. Active-site charge relay system residues include His65 and Asp116. Disulfide bonds link Cys151–Cys218, Cys182–Cys197, Cys208–Cys237, and Cys322–Cys341. The Charge relay system role is filled by Ser212. Residues Ile256 to Phe378 enclose the CUB domain.

Belongs to the peptidase S1 family. In terms of tissue distribution, component of the acid-insoluble organic matrix of the aragonitic skeleton (at protein level).

It is found in the secreted. This Acropora millepora (Staghorn coral) protein is CUB and peptidase domain-containing protein 1.